The following is a 283-amino-acid chain: Bis(5'-nucleosyl)-tetraphosphatase, symmetrical (283 aa).

The protein belongs to the Ap4A hydrolase family.

The catalysed reaction is P(1),P(4)-bis(5'-adenosyl) tetraphosphate + H2O = 2 ADP + 2 H(+). Hydrolyzes diadenosine 5',5'''-P1,P4-tetraphosphate to yield ADP. In Pseudomonas fluorescens (strain SBW25), this protein is Bis(5'-nucleosyl)-tetraphosphatase, symmetrical.